The following is a 751-amino-acid chain: E3 ubiquitin-protein ligase SMURF2 (751 aa).

The region spanning 1–119 is the C2 domain; that stretch reads MSNQGSRRNG…TGYQRLDLCK (119 aa). Residues 157 to 190 enclose the WW 1 domain; sequence NDLPDGWEERRTASGRIQYLNHITRTTQWERPTR. Over residues 214 to 226 the composition is skewed to polar residues; sequence GTNGASCGQTSDP. The tract at residues 214 to 236 is disordered; sequence GTNGASCGQTSDPRISERRVRSQ. 2 consecutive WW domains span residues 251 to 284 and 297 to 330; these read PDLPEGYEQRTTQQGQVYFLHTQTGVSTWHDPRV and GPLPPGWEIRNTATGRVYFVDHNNRTTQFTDPRL. The HECT domain maps to 417–751; sequence RPKDLWKRLM…IEETCGFAVE (335 aa). Cys719 functions as the Glycyl thioester intermediate in the catalytic mechanism.

The protein resides in the nucleus. It localises to the cytoplasm. Its subcellular location is the cell membrane. It is found in the membrane raft. The enzyme catalyses S-ubiquitinyl-[E2 ubiquitin-conjugating enzyme]-L-cysteine + [acceptor protein]-L-lysine = [E2 ubiquitin-conjugating enzyme]-L-cysteine + N(6)-ubiquitinyl-[acceptor protein]-L-lysine.. It functions in the pathway protein modification; protein ubiquitination. Its function is as follows. E3 ubiquitin-protein ligase which accepts ubiquitin from an E2 ubiquitin-conjugating enzyme in the form of a thioester and then directly transfers the ubiquitin to targeted substrates. The protein is E3 ubiquitin-protein ligase SMURF2 (smurf2) of Xenopus laevis (African clawed frog).